The primary structure comprises 252 residues: Trypsin iota (252 aa).

The N-terminal stretch at 1 to 19 (MAVYGIVATVLVLLLLGDA) is a signal peptide. A propeptide spans 20–27 (SDVEATGR) (activation peptide). The Peptidase S1 domain maps to 28–250 (IIGGSDQLIR…LRPWIVKAAN (223 aa)). C53 and C69 form a disulfide bridge. Residues H68 and D113 each act as charge relay system in the active site. 2 cysteine pairs are disulfide-bonded: C175–C193 and C202–C226. The Charge relay system role is filled by S206.

This sequence belongs to the peptidase S1 family.

It is found in the secreted. Its subcellular location is the extracellular space. It carries out the reaction Preferential cleavage: Arg-|-Xaa, Lys-|-Xaa.. The polypeptide is Trypsin iota (iotaTry) (Drosophila melanogaster (Fruit fly)).